The chain runs to 692 residues: Elongation factor G (692 aa).

A tr-type G domain is found at 8-282 (EKTRNIGIMA…AIVDFLPAPT (275 aa)). GTP contacts are provided by residues 17–24 (AHIDAGKT), 81–85 (DTPGH), and 135–138 (NKMD).

This sequence belongs to the TRAFAC class translation factor GTPase superfamily. Classic translation factor GTPase family. EF-G/EF-2 subfamily.

The protein localises to the cytoplasm. In terms of biological role, catalyzes the GTP-dependent ribosomal translocation step during translation elongation. During this step, the ribosome changes from the pre-translocational (PRE) to the post-translocational (POST) state as the newly formed A-site-bound peptidyl-tRNA and P-site-bound deacylated tRNA move to the P and E sites, respectively. Catalyzes the coordinated movement of the two tRNA molecules, the mRNA and conformational changes in the ribosome. This is Elongation factor G from Moorella thermoacetica (strain ATCC 39073 / JCM 9320).